A 266-amino-acid polypeptide reads, in one-letter code: Glutamate racemase (266 aa).

Residues 9–10 (DS) and 41–42 (YG) contribute to the substrate site. Residue Cys-72 is the Proton donor/acceptor of the active site. A substrate-binding site is contributed by 73-74 (NT). Cys-184 serves as the catalytic Proton donor/acceptor. Residue 185–186 (TH) participates in substrate binding.

This sequence belongs to the aspartate/glutamate racemases family.

The catalysed reaction is L-glutamate = D-glutamate. It functions in the pathway cell wall biogenesis; peptidoglycan biosynthesis. Functionally, provides the (R)-glutamate required for cell wall biosynthesis. The protein is Glutamate racemase of Staphylococcus haemolyticus.